The primary structure comprises 281 residues: MIETLLPASALAFPAIDPVIFRVGPLAVHWYGLGYVVGILFAWWYGKKLLRSHRLWANNQPPMAPEALDDFVIWAALGVVLGGRIGYVLFYNFSYYISNPLAIPALWDGGMSFHGGILGTTLAMILFARSRGILVWSMFDTIAAGVPIGLGVVRVANFINSELWGRVSDVPWAVYFPNGGPLPRHPSQLYEAFLEGLVLFFVLFVLVWGARKLKQPGFVAGAFVTGYGLSRIAVEFFREPDAQIGYLFGGWLTMGMVLSVPMVLLGLWAMWRANRAAARNA.

A run of 4 helical transmembrane segments spans residues 23–43, 71–91, 107–127, and 133–153; these read VGPL…LFAW, FVIW…VLFY, WDGG…MILF, and ILVW…LGVV. An a 1,2-diacyl-sn-glycero-3-phospho-(1'-sn-glycerol)-binding site is contributed by Arg154. The next 3 helical transmembrane spans lie at 189 to 209, 217 to 237, and 247 to 267; these read LYEA…LVWG, GFVA…VEFF, and LFGG…LLGL.

It belongs to the Lgt family.

The protein resides in the cell inner membrane. The enzyme catalyses L-cysteinyl-[prolipoprotein] + a 1,2-diacyl-sn-glycero-3-phospho-(1'-sn-glycerol) = an S-1,2-diacyl-sn-glyceryl-L-cysteinyl-[prolipoprotein] + sn-glycerol 1-phosphate + H(+). It participates in protein modification; lipoprotein biosynthesis (diacylglyceryl transfer). Catalyzes the transfer of the diacylglyceryl group from phosphatidylglycerol to the sulfhydryl group of the N-terminal cysteine of a prolipoprotein, the first step in the formation of mature lipoproteins. The chain is Phosphatidylglycerol--prolipoprotein diacylglyceryl transferase from Brucella abortus (strain S19).